A 194-amino-acid polypeptide reads, in one-letter code: Large ribosomal subunit protein bL25 (194 aa).

The protein belongs to the bacterial ribosomal protein bL25 family. CTC subfamily. As to quaternary structure, part of the 50S ribosomal subunit; part of the 5S rRNA/L5/L18/L25 subcomplex. Contacts the 5S rRNA. Binds to the 5S rRNA independently of L5 and L18.

This is one of the proteins that binds to the 5S RNA in the ribosome where it forms part of the central protuberance. The sequence is that of Large ribosomal subunit protein bL25 from Thermobifida fusca (strain YX).